A 244-amino-acid chain; its full sequence is Ribonuclease HII (244 aa).

Residues 31–222 (RLIAGVDEAG…VRLALQGREG (192 aa)) form the RNase H type-2 domain. Residues aspartate 37, glutamate 38, and aspartate 130 each coordinate a divalent metal cation.

It belongs to the RNase HII family. Mn(2+) serves as cofactor. Mg(2+) is required as a cofactor.

It localises to the cytoplasm. The enzyme catalyses Endonucleolytic cleavage to 5'-phosphomonoester.. Functionally, endonuclease that specifically degrades the RNA of RNA-DNA hybrids. In Xanthomonas axonopodis pv. citri (strain 306), this protein is Ribonuclease HII.